The chain runs to 198 residues: Imidazoleglycerol-phosphate dehydratase (198 aa).

This sequence belongs to the imidazoleglycerol-phosphate dehydratase family.

Its subcellular location is the cytoplasm. It catalyses the reaction D-erythro-1-(imidazol-4-yl)glycerol 3-phosphate = 3-(imidazol-4-yl)-2-oxopropyl phosphate + H2O. Its pathway is amino-acid biosynthesis; L-histidine biosynthesis; L-histidine from 5-phospho-alpha-D-ribose 1-diphosphate: step 6/9. In Herminiimonas arsenicoxydans, this protein is Imidazoleglycerol-phosphate dehydratase.